Here is a 493-residue protein sequence, read N- to C-terminus: Endoglucanase 23 (493 aa).

Positions 1 to 23 are cleaved as a signal peptide; the sequence is MKASIYLVTVFILLLLLLPTAIP. The active-site Nucleophile is the Asp-78. N-linked (GlcNAc...) asparagine glycosylation is present at Asn-297. His-410 is an active-site residue. N-linked (GlcNAc...) asparagine glycosylation is present at Asn-465. Residue Glu-470 is part of the active site.

Belongs to the glycosyl hydrolase 9 (cellulase E) family.

Its subcellular location is the secreted. It catalyses the reaction Endohydrolysis of (1-&gt;4)-beta-D-glucosidic linkages in cellulose, lichenin and cereal beta-D-glucans.. This is Endoglucanase 23 from Arabidopsis thaliana (Mouse-ear cress).